The sequence spans 144 residues: 3-dehydroquinate dehydratase (144 aa).

Tyr24 serves as the catalytic Proton acceptor. Substrate-binding residues include Asn76, His82, and Asp89. His102 acts as the Proton donor in catalysis. Residues 103-104 (LS) and Arg113 contribute to the substrate site.

Belongs to the type-II 3-dehydroquinase family. In terms of assembly, homododecamer.

It catalyses the reaction 3-dehydroquinate = 3-dehydroshikimate + H2O. Its pathway is metabolic intermediate biosynthesis; chorismate biosynthesis; chorismate from D-erythrose 4-phosphate and phosphoenolpyruvate: step 3/7. In terms of biological role, catalyzes a trans-dehydration via an enolate intermediate. The polypeptide is 3-dehydroquinate dehydratase (Nitrosomonas europaea (strain ATCC 19718 / CIP 103999 / KCTC 2705 / NBRC 14298)).